The following is a 162-amino-acid chain: Large ribosomal subunit protein uL10 (162 aa).

The protein belongs to the universal ribosomal protein uL10 family. As to quaternary structure, part of the ribosomal stalk of the 50S ribosomal subunit. The N-terminus interacts with L11 and the large rRNA to form the base of the stalk. The C-terminus forms an elongated spine to which L12 dimers bind in a sequential fashion forming a multimeric L10(L12)X complex.

Forms part of the ribosomal stalk, playing a central role in the interaction of the ribosome with GTP-bound translation factors. This chain is Large ribosomal subunit protein uL10, found in Phytoplasma mali (strain AT).